The sequence spans 260 residues: Major prion protein (260 aa).

Positions 1-22 are cleaved as a signal peptide; it reads MANLGCWMLVLFVATWSDLGLC. Positions 23–237 are interaction with GRB2, ERI3 and SYN1; sequence KKRPKPGGWN…ESQAYYQRGS (215 aa). Residues 26–112 are disordered; sequence PKPGGWNTGG…HNQWNKPSKP (87 aa). 6 repeat units span residues 51-58, 59-66, 67-74, 75-82, 83-90, and 91-98. Residues 51–98 are 6 X 8 AA tandem repeats of P-H-G-G-G-W-G-Q; sequence PQGGGWGQPHGGGWGQPHGGGWGQPHGGGWGQPHGGGWGQPHGGGWGQ. Gly residues predominate over residues 52–102; it reads QGGGWGQPHGGGWGQPHGGGWGQPHGGGWGQPHGGGWGQPHGGGWGQGGGT. Residues histidine 68, glycine 69, glycine 70, histidine 76, glycine 77, glycine 78, histidine 84, glycine 85, glycine 86, histidine 92, glycine 93, and glycine 94 each contribute to the Cu(2+) site. The cysteines at positions 186 and 221 are disulfide-linked. Asparagine 188 and asparagine 204 each carry an N-linked (GlcNAc...) asparagine glycan. Serine 237 carries the GPI-anchor amidated serine lipid modification. Positions 238-260 are cleaved as a propeptide — removed in mature form; that stretch reads SMVLFSSPPVILLISFLIFLIVG.

It belongs to the prion family. Monomer and homodimer. Has a tendency to aggregate into amyloid fibrils containing a cross-beta spine, formed by a steric zipper of superposed beta-strands. Soluble oligomers may represent an intermediate stage on the path to fibril formation. Copper binding may promote oligomerization. Interacts with GRB2, APP, ERI3/PRNPIP and SYN1. Mislocalized cytosolically exposed PrP interacts with MGRN1; this interaction alters MGRN1 subcellular location and causes lysosomal enlargement. Interacts with KIAA1191.

It is found in the cell membrane. The protein resides in the golgi apparatus. Its function is as follows. Its primary physiological function is unclear. Has cytoprotective activity against internal or environmental stresses. May play a role in neuronal development and synaptic plasticity. May be required for neuronal myelin sheath maintenance. May play a role in iron uptake and iron homeostasis. Soluble oligomers are toxic to cultured neuroblastoma cells and induce apoptosis (in vitro). Association with GPC1 (via its heparan sulfate chains) targets PRNP to lipid rafts. Also provides Cu(2+) or Zn(2+) for the ascorbate-mediated GPC1 deaminase degradation of its heparan sulfate side chains. The sequence is that of Major prion protein (PRNP) from Saimiri sciureus (Common squirrel monkey).